Here is a 416-residue protein sequence, read N- to C-terminus: Casein kinase I isoform epsilon (416 aa).

Residues 9–277 (YRLGRKIGSG…YLRQLFRNLF (269 aa)) form the Protein kinase domain. ATP-binding positions include 15-23 (IGSGSFGDI) and Lys38. Residue Asp128 is the Proton acceptor of the active site. A compositionally biased stretch (basic and acidic residues) spans 301–318 (PEDMDRERREHEREERMG). Residues 301–416 (PEDMDRERRE…TSVPFDHLGK (116 aa)) form a disordered region. The span at 324-338 (ATRALPPGPPAGATG) shows a compositional bias: low complexity. Composition is skewed to polar residues over residues 350 to 365 (STPT…TSPR) and 400 to 409 (SRISASQTSV).

Belongs to the protein kinase superfamily. CK1 Ser/Thr protein kinase family. Casein kinase I subfamily. Monomer. Component of the circadian core oscillator, which includes the CRY proteins, CLOCK, or NPAS2, BMAL1 or BMAL2, CSNK1E, and the PER proteins.

The protein localises to the cytoplasm. It carries out the reaction L-seryl-[protein] + ATP = O-phospho-L-seryl-[protein] + ADP + H(+). The enzyme catalyses L-threonyl-[protein] + ATP = O-phospho-L-threonyl-[protein] + ADP + H(+). In terms of biological role, casein kinases are operationally defined by their preferential utilization of acidic proteins such as caseins as substrates. Can phosphorylate a large number of proteins. Participates in Wnt signaling. Phosphorylates DVL1. Central component of the circadian clock. May act as a negative regulator of circadian rhythmicity by phosphorylating PER1 and PER2. Retains PER1 in the cytoplasm. The protein is Casein kinase I isoform epsilon (CSNK1E) of Gallus gallus (Chicken).